The primary structure comprises 190 residues: dCTP deaminase, dUMP-forming (190 aa).

DCTP-binding positions include 101–106 (KSSLGR), Asp-119, 127–129 (TLE), Gln-148, Tyr-162, Lys-170, and Gln-174. The Proton donor/acceptor role is filled by Glu-129. A disordered region spans residues 160-190 (HPYGSSRAGSKYQGQRGPTPSRSYQNFIRST). The segment covering 171-190 (YQGQRGPTPSRSYQNFIRST) has biased composition (polar residues).

The protein belongs to the dCTP deaminase family. As to quaternary structure, homotrimer.

It catalyses the reaction dCTP + 2 H2O = dUMP + NH4(+) + diphosphate. It functions in the pathway pyrimidine metabolism; dUMP biosynthesis; dUMP from dCTP: step 1/1. Its function is as follows. Bifunctional enzyme that catalyzes both the deamination of dCTP to dUTP and the hydrolysis of dUTP to dUMP without releasing the toxic dUTP intermediate. This Mycobacterium tuberculosis (strain ATCC 25177 / H37Ra) protein is dCTP deaminase, dUMP-forming.